The primary structure comprises 447 residues: Tyrosine aminotransferase (447 aa).

At Lys273 the chain carries N6-(pyridoxal phosphate)lysine. Position 441 is a phosphoserine (Ser441).

This sequence belongs to the class-I pyridoxal-phosphate-dependent aminotransferase family. As to quaternary structure, homodimer. Pyridoxal 5'-phosphate is required as a cofactor.

The enzyme catalyses L-tyrosine + 2-oxoglutarate = 3-(4-hydroxyphenyl)pyruvate + L-glutamate. The protein operates within amino-acid degradation; L-phenylalanine degradation; acetoacetate and fumarate from L-phenylalanine: step 2/6. Its function is as follows. Transaminase involved in tyrosine breakdown. Converts tyrosine to p-hydroxyphenylpyruvate. Can catalyze the reverse reaction, using glutamic acid, with 2-oxoglutarate as cosubstrate (in vitro). Has much lower affinity and transaminase activity for phenylalanine. The polypeptide is Tyrosine aminotransferase (TAT) (Bos taurus (Bovine)).